Here is a 251-residue protein sequence, read N- to C-terminus: Tachykinins (251 aa).

The signal sequence occupies residues methionine 1–alanine 21. Residues glutamine 22 to serine 25 constitute a propeptide that is removed on maturation. The residue at position 36 (arginine 36) is an Arginine amide. A propeptide spanning residues lysine 39–tyrosine 50 is cleaved from the precursor. A Lysine amide modification is found at lysine 61. The propeptide occupies serine 65–aspartate 163. Residue arginine 176 is modified to Arginine amide. Positions serine 180–asparagine 183 are excised as a propeptide. Arginine 199 is subject to Arginine amide. Positions aspartate 203–proline 223 are excised as a propeptide. Arginine 235 is subject to Arginine amide. A propeptide spanning residues tryptophan 239–asparagine 251 is cleaved from the precursor.

This sequence belongs to the tachykinin family. As to expression, tachykinin-related peptide 1: Expressed in antennal lobe (AL) and gnathal ganglion (GNG) (at protein level). Expression in AL detected in all animals, in GNG in most animals (at protein level). Not expressed in corpora cardiaca (CC) and corpora allata (CA) (at protein level). Tachykinin-related peptide 2: Expressed in antennal lobe (AL) corpora cardiaca (CC) and corpora allata (CA) with expression detected in few animals (at protein level). Not expressed in gnathal ganglion (GNG) (at protein level). Tachykinin-related peptide 4: Expressed in corpora cardiaca (CC), corpora allata (CA), antennal lobe (AL) and gnathal ganglion (GNG) (at protein level). Expression in AL and GNG detected in most animals, in CC and CA detected in few animals (at protein level). Tachykinin-related peptide 5: Expressed in corpora cardiaca (CC), corpora allata (CA), antennal lobe (AL) and gnathal ganglion (GNG) (at protein level). Expression in CC and CA detected in some animals, in AL and GNG in few animals (at protein level). Tachykinin-related peptide 6: Expressed in antennal lobe (AL) and gnathal ganglion (GNG) (at protein level). Expression in AL detected in all animals, in GNG in some animals (at protein level). Not expressed in corpora cardiaca (CC) and corpora allata (CA) (at protein level).

The protein localises to the secreted. In terms of biological role, tachykinins are active peptides which excite neurons, evoke behavioral responses, are potent vasodilators and secretagogues, and contract (directly or indirectly) many smooth muscles. This is Tachykinins from Agrotis ipsilon (Black cutworm moth).